Consider the following 564-residue polypeptide: E3 ubiquitin-protein ligase hrd-like protein 1 (564 aa).

Residues serine 17–phenylalanine 37 form a helical membrane-spanning segment. The N-linked (GlcNAc...) asparagine glycan is linked to asparagine 53. Transmembrane regions (helical) follow at residues tyrosine 61–leucine 81, leucine 86–isoleucine 106, glutamine 123–glutamine 143, valine 148–threonine 168, lysine 185–serine 205, proline 215–phenylalanine 235, and leucine 272–leucine 292. Residues cysteine 335–arginine 373 form an RING-type; atypical zinc finger. In terms of domain architecture, CUE spans glutamine 432–isoleucine 474.

Its subcellular location is the membrane. Proposed to have a role in neuroprotection. The sequence is that of E3 ubiquitin-protein ligase hrd-like protein 1 (hrdl-1) from Caenorhabditis elegans.